We begin with the raw amino-acid sequence, 159 residues long: Alpha-lactalbumin (159 aa).

An N-terminal signal peptide occupies residues 1–19; the sequence is MMRFVPLFLACISLPAFQA. The C-type lysozyme domain occupies 20–142; it reads TEFTKCEVSH…KLEQWRCEKP (123 aa). Cystine bridges form between C25–C139, C47–C130, C80–C96, and C92–C110. N64 carries an N-linked (GlcNAc...) asparagine glycan. Ca(2+) is bound by residues K98, D101, D106, and D107.

The protein belongs to the glycosyl hydrolase 22 family. As to quaternary structure, lactose synthase (LS) is a heterodimer of a catalytic component, beta1,4-galactosyltransferase (beta4Gal-T1) and a regulatory component, alpha-lactalbumin (LA). Mammary gland specific. Secreted in milk.

Its subcellular location is the secreted. Its function is as follows. Regulatory subunit of lactose synthase, changes the substrate specificity of galactosyltransferase in the mammary gland making glucose a good acceptor substrate for this enzyme. This enables LS to synthesize lactose, the major carbohydrate component of milk. In other tissues, galactosyltransferase transfers galactose onto the N-acetylglucosamine of the oligosaccharide chains in glycoproteins. In Rattus norvegicus (Rat), this protein is Alpha-lactalbumin (Lalba).